We begin with the raw amino-acid sequence, 158 residues long: 3-hydroxyacyl-[acyl-carrier-protein] dehydratase FabZ (158 aa).

Residue His61 is part of the active site.

Belongs to the thioester dehydratase family. FabZ subfamily.

It is found in the cytoplasm. The enzyme catalyses a (3R)-hydroxyacyl-[ACP] = a (2E)-enoyl-[ACP] + H2O. In terms of biological role, involved in unsaturated fatty acids biosynthesis. Catalyzes the dehydration of short chain beta-hydroxyacyl-ACPs and long chain saturated and unsaturated beta-hydroxyacyl-ACPs. The polypeptide is 3-hydroxyacyl-[acyl-carrier-protein] dehydratase FabZ (Methylobacterium radiotolerans (strain ATCC 27329 / DSM 1819 / JCM 2831 / NBRC 15690 / NCIMB 10815 / 0-1)).